We begin with the raw amino-acid sequence, 281 residues long: MAMMEVQGGPSLGQTCVLIVIFTVLLQSLCVAVTYVYFTNELKQMQDKYSKSGIACFLKEDDSYWDPNDEESMNSPCWQVKWQLRQLVRKMILRTSEETISTVQEKQQNISPLVRERGPQRVAAHITGTRGRSNTLSSPNSKNEKALGRKINSWESSRSGHSFLSNLHLRNGELVIHEKGFYYIYSQTYFRFQEEIKENTKNDKQMVQYIYKYTSYPDPILLMKSARNSCWSKDAEYGLYSIYQGGIFELKENDRIFVSVTNEHLIDMDHEASFFGAFLVG.

Over 1 to 17 (MAMMEVQGGPSLGQTCV) the chain is Cytoplasmic. The helical; Signal-anchor for type II membrane protein transmembrane segment at 18–38 (LIVIFTVLLQSLCVAVTYVYF) threads the bilayer. The Extracellular segment spans residues 39 to 281 (TNELKQMQDK…ASFFGAFLVG (243 aa)). The THD domain maps to 122–280 (VAAHITGTRG…EASFFGAFLV (159 aa)). Residues 124 to 144 (AHITGTRGRSNTLSSPNSKNE) are disordered. Polar residues predominate over residues 130-141 (RGRSNTLSSPNS). Cys230 provides a ligand contact to Zn(2+).

It belongs to the tumor necrosis factor family. Homotrimer. One TNFSF10 homotrimer interacts with three TNFSF10A mononers. One TNFSF10 homotrimer interacts with three TNFSF10B mononers. Tyrosine phosphorylated by PKDCC/VLK. As to expression, widespread; most predominant in spleen, lung and prostate.

It is found in the cell membrane. Its subcellular location is the secreted. Its function is as follows. Cytokine that binds to TNFRSF10A/TRAILR1, TNFRSF10B/TRAILR2, TNFRSF10C/TRAILR3, TNFRSF10D/TRAILR4 and possibly also to TNFRSF11B/OPG. Induces apoptosis. Its activity may be modulated by binding to the decoy receptors TNFRSF10C/TRAILR3, TNFRSF10D/TRAILR4 and TNFRSF11B/OPG that cannot induce apoptosis. The chain is Tumor necrosis factor ligand superfamily member 10 (TNFSF10) from Homo sapiens (Human).